A 118-amino-acid chain; its full sequence is MARIAGVNIPDHKHAVISLTYVYGIGRTKAKQICSAAGVAESTKIGDLSEEQVDTIRNEVAKFTVEGDLRREVSMNIKRLMDLGCYRGLRHRRNLPVRGQRSKTNARTRKGPRKPIKR.

The interval 93–118 is disordered; that stretch reads RNLPVRGQRSKTNARTRKGPRKPIKR.

The protein belongs to the universal ribosomal protein uS13 family. Part of the 30S ribosomal subunit. Forms a loose heterodimer with protein S19. Forms two bridges to the 50S subunit in the 70S ribosome.

In terms of biological role, located at the top of the head of the 30S subunit, it contacts several helices of the 16S rRNA. In the 70S ribosome it contacts the 23S rRNA (bridge B1a) and protein L5 of the 50S subunit (bridge B1b), connecting the 2 subunits; these bridges are implicated in subunit movement. Contacts the tRNAs in the A and P-sites. The chain is Small ribosomal subunit protein uS13 from Saccharophagus degradans (strain 2-40 / ATCC 43961 / DSM 17024).